A 525-amino-acid polypeptide reads, in one-letter code: Glucose-6-phosphate isomerase (525 aa).

The active-site Proton donor is the Glu-347. Catalysis depends on residues His-378 and Lys-493.

This sequence belongs to the GPI family.

It localises to the cytoplasm. The enzyme catalyses alpha-D-glucose 6-phosphate = beta-D-fructose 6-phosphate. Its pathway is carbohydrate biosynthesis; gluconeogenesis. It participates in carbohydrate degradation; glycolysis; D-glyceraldehyde 3-phosphate and glycerone phosphate from D-glucose: step 2/4. In terms of biological role, catalyzes the reversible isomerization of glucose-6-phosphate to fructose-6-phosphate. The polypeptide is Glucose-6-phosphate isomerase (Chlamydia trachomatis serovar D (strain ATCC VR-885 / DSM 19411 / UW-3/Cx)).